Consider the following 251-residue polypeptide: Octanoyltransferase (251 aa).

Residues 29-251 (AATPNSLWIC…GQKLSSYLAP (223 aa)) enclose the BPL/LPL catalytic domain. 68-75 (RGGQVTYH) contacts substrate. Positions 137-174 (ARLRPSPQPSPKGRGSSTPVLLPPLPGEGGGGGGPDPD) are disordered. Substrate-binding positions include 184 to 186 (ALG) and 197 to 199 (GVA). C215 acts as the Acyl-thioester intermediate in catalysis.

The protein belongs to the LipB family.

It localises to the cytoplasm. It catalyses the reaction octanoyl-[ACP] + L-lysyl-[protein] = N(6)-octanoyl-L-lysyl-[protein] + holo-[ACP] + H(+). It participates in protein modification; protein lipoylation via endogenous pathway; protein N(6)-(lipoyl)lysine from octanoyl-[acyl-carrier-protein]: step 1/2. Catalyzes the transfer of endogenously produced octanoic acid from octanoyl-acyl-carrier-protein onto the lipoyl domains of lipoate-dependent enzymes. Lipoyl-ACP can also act as a substrate although octanoyl-ACP is likely to be the physiological substrate. This is Octanoyltransferase from Polaromonas sp. (strain JS666 / ATCC BAA-500).